The sequence spans 310 residues: Ribosomal RNA small subunit methyltransferase H (310 aa).

S-adenosyl-L-methionine contacts are provided by residues 47-49 (GGH), Asp-66, Phe-93, Asp-108, and Gln-115. The interval 275–310 (RKPFMASEQEQADNPRSRSAKLRIARRRPDTARSGP) is disordered. A compositionally biased stretch (basic and acidic residues) spans 301–310 (RRPDTARSGP).

This sequence belongs to the methyltransferase superfamily. RsmH family.

Its subcellular location is the cytoplasm. The enzyme catalyses cytidine(1402) in 16S rRNA + S-adenosyl-L-methionine = N(4)-methylcytidine(1402) in 16S rRNA + S-adenosyl-L-homocysteine + H(+). Its function is as follows. Specifically methylates the N4 position of cytidine in position 1402 (C1402) of 16S rRNA. This chain is Ribosomal RNA small subunit methyltransferase H, found in Synechococcus sp. (strain CC9311).